A 532-amino-acid polypeptide reads, in one-letter code: Eukaryotic translation initiation factor 3 subunit D (532 aa).

The disordered stretch occupies residues 108-161 (ATVLKTRGGAPRGGSFAGRGGSQRGGRFQNQPGRGPVGGQRGPNPRFGKSKFGW). The segment covering 117–131 (APRGGSFAGRGGSQR) has biased composition (gly residues). Over residues 132 to 141 (GGRFQNQPGR) the composition is skewed to low complexity. Residues 296 to 310 (PLDFITVDENAADPP) form an RNA gate region.

Belongs to the eIF-3 subunit D family. In terms of assembly, component of the eukaryotic translation initiation factor 3 (eIF-3) complex.

It localises to the cytoplasm. Its function is as follows. mRNA cap-binding component of the eukaryotic translation initiation factor 3 (eIF-3) complex, which is involved in protein synthesis of a specialized repertoire of mRNAs and, together with other initiation factors, stimulates binding of mRNA and methionyl-tRNAi to the 40S ribosome. The eIF-3 complex specifically targets and initiates translation of a subset of mRNAs involved in cell proliferation. In the eIF-3 complex, eif3d specifically recognizes and binds the 7-methylguanosine cap of a subset of mRNAs. The polypeptide is Eukaryotic translation initiation factor 3 subunit D (Yarrowia lipolytica (strain CLIB 122 / E 150) (Yeast)).